Here is a 32-residue protein sequence, read N- to C-terminus: Peptide II.10.10 (32 aa).

3 disulfides stabilise this stretch: Cys5–Cys24, Cys10–Cys29, and Cys14–Cys31.

The protein belongs to the short scorpion toxin superfamily. Potassium channel inhibitor family. Alpha-KTx 10 subfamily. Expressed by the venom gland.

Its subcellular location is the secreted. The protein is Peptide II.10.10 of Centruroides tecomanus (Scorpion).